We begin with the raw amino-acid sequence, 349 residues long: Increased DNA methylation 2 (349 aa).

The segment at 210–230 is disordered; the sequence is EDNAGTCTSGEESDVAAKPEV. One can recognise a sHSP domain in the interval 233–349; sequence EAHGGLMVGL…VMKNLQKQTV (117 aa).

It belongs to the small heat shock protein (HSP20) family. As to quaternary structure, homodimer or oligomer. May form an 16-mer complex. Interacts with MBD7 (via C-terminus). Interacts with IDM1 (via N-terminus). Interacts with IMD3. Part of a complex made of MBD7, IDM1, IDM2, IDM3 and ROS1. As to expression, expressed in cotyledons and hypocotyls in young seedlings.

It is found in the nucleus. The protein resides in the nucleoplasm. In terms of biological role, prevents DNA hypermethylation and transcriptional silencing of transgenes and of some endogenous genes. May act as a molecular chaperone of IDM1, regulating its H3K18 acetylation activity. In Arabidopsis thaliana (Mouse-ear cress), this protein is Increased DNA methylation 2.